We begin with the raw amino-acid sequence, 244 residues long: Tyrosine recombinase XerD-like (244 aa).

The region spanning 1–73 is the Core-binding (CB) domain; the sequence is MRDRISAFLE…ACNQFLYFLY (73 aa). The Tyr recombinase domain occupies 90–244; sequence AEKKTEKPEI…KTVLTLEKYR (155 aa). Catalysis depends on residues Lys-150 and Arg-211. Residue Tyr-243 is the O-(3'-phospho-DNA)-tyrosine intermediate of the active site.

It belongs to the 'phage' integrase family. XerD-like subfamily.

Its subcellular location is the cytoplasm. Its function is as follows. Putative tyrosine recombinase. Not involved in the cutting and rejoining of the recombining DNA molecules on dif(SL) site. The polypeptide is Tyrosine recombinase XerD-like (Streptococcus pneumoniae (strain CGSP14)).